We begin with the raw amino-acid sequence, 220 residues long: uncharacterized protein (220 aa).

A helical transmembrane segment spans residues F10–F30.

The protein localises to the membrane. This is an uncharacterized protein from Methanocaldococcus jannaschii (strain ATCC 43067 / DSM 2661 / JAL-1 / JCM 10045 / NBRC 100440) (Methanococcus jannaschii).